A 180-amino-acid polypeptide reads, in one-letter code: dCTP deaminase, dUMP-forming (180 aa).

DCTP-binding positions include 96 to 101 (RSSLGR), D113, 121 to 123 (TLE), Q142, Y156, and Q163. Catalysis depends on E123, which acts as the Proton donor/acceptor.

This sequence belongs to the dCTP deaminase family. Homotrimer.

The enzyme catalyses dCTP + 2 H2O = dUMP + NH4(+) + diphosphate. It functions in the pathway pyrimidine metabolism; dUMP biosynthesis; dUMP from dCTP: step 1/1. Its function is as follows. Bifunctional enzyme that catalyzes both the deamination of dCTP to dUTP and the hydrolysis of dUTP to dUMP without releasing the toxic dUTP intermediate. This chain is dCTP deaminase, dUMP-forming, found in Aquifex aeolicus (strain VF5).